The sequence spans 453 residues: Serine incorporator 1 (453 aa).

Residue G2 is the site of N-myristoyl glycine attachment. Residues G2 to R39 lie on the Cytoplasmic side of the membrane. A helical transmembrane segment spans residues L40–G60. At M61–K88 the chain is on the lumenal side. A helical membrane pass occupies residues A89 to I109. Residues K110 to N123 lie on the Cytoplasmic side of the membrane. Residues G124–P144 traverse the membrane as a helical segment. Topologically, residues E145–V151 are lumenal. The chain crosses the membrane as a helical span at residues W152–I172. At D173–A197 the chain is on the cytoplasmic side. The chain crosses the membrane as a helical span at residues L198–V218. Residues Y219 to A231 are Lumenal-facing. The chain crosses the membrane as a helical span at residues F232–I252. Residues Q253 to S259 lie on the Cytoplasmic side of the membrane. The helical transmembrane segment at G260–T280 threads the bilayer. The Lumenal portion of the chain corresponds to N281–S309. Residues V310–Y330 form a helical membrane-spanning segment. Residues S331–S387 lie on the Cytoplasmic side of the membrane. S351 bears the Phosphoserine mark. Residue T352 is modified to Phosphothreonine. Residue S364 is modified to Phosphoserine. Residues F388–Y408 traverse the membrane as a helical segment. At R409–K426 the chain is on the lumenal side. The helical transmembrane segment at I427–L447 threads the bilayer. At T448–D453 the chain is on the cytoplasmic side.

Belongs to the TDE1 family. In terms of assembly, interacts with SPTLC1.

The protein localises to the endoplasmic reticulum membrane. Its function is as follows. Enhances the incorporation of serine into phosphatidylserine and sphingolipids. The chain is Serine incorporator 1 (SERINC1) from Bos taurus (Bovine).